Here is a 124-residue protein sequence, read N- to C-terminus: Small ribosomal subunit protein uS11 (124 aa).

This sequence belongs to the universal ribosomal protein uS11 family. Part of the 30S ribosomal subunit. Interacts with proteins S7 and S18. Binds to IF-3.

Located on the platform of the 30S subunit, it bridges several disparate RNA helices of the 16S rRNA. Forms part of the Shine-Dalgarno cleft in the 70S ribosome. The protein is Small ribosomal subunit protein uS11 of Anaplasma phagocytophilum (strain HZ).